The sequence spans 250 residues: tRNA (guanine-N(1)-)-methyltransferase (250 aa).

S-adenosyl-L-methionine is bound by residues Gly115 and 135-140 (LGDFVL).

Belongs to the RNA methyltransferase TrmD family. In terms of assembly, homodimer.

It is found in the cytoplasm. The enzyme catalyses guanosine(37) in tRNA + S-adenosyl-L-methionine = N(1)-methylguanosine(37) in tRNA + S-adenosyl-L-homocysteine + H(+). Specifically methylates guanosine-37 in various tRNAs. In Legionella pneumophila (strain Paris), this protein is tRNA (guanine-N(1)-)-methyltransferase.